The chain runs to 159 residues: MADARDMELIKPYNGDPFTGHLSTPISDSDFTRTFIGNLPAYRKGLSPILRGLEIGMAHGYFLIGPWVKLGPLRDSDVANLGGLISGIALILIATACLAAYGIVSFQKEEAAANPLNTAEGWSQFTAGFFVGATGGAFVAFTLLEKFDVVDGIMTGLFN.

The next 3 membrane-spanning stretches (helical) occupy residues 53 to 73 (LEIG…LGPL), 84 to 104 (LISG…YGIV), and 125 to 145 (FTAG…TLLE).

The protein belongs to the PsaL family.

It is found in the cellular thylakoid membrane. The sequence is that of Photosystem I reaction center subunit XI from Cyanothece sp. (strain PCC 7425 / ATCC 29141).